Reading from the N-terminus, the 233-residue chain is Superoxide dismutase [Mn], mitochondrial (233 aa).

A mitochondrion-targeting transit peptide spans 1–26 (MFAKTAAANLTKKGGLSLLSTTARRT). The Mn(2+) site is built by H52 and H107. Phosphothreonine is present on residues T147 and T149. Mn(2+)-binding residues include D194 and H198.

This sequence belongs to the iron/manganese superoxide dismutase family. As to quaternary structure, homotetramer. Mn(2+) serves as cofactor.

It localises to the mitochondrion matrix. It carries out the reaction 2 superoxide + 2 H(+) = H2O2 + O2. In terms of biological role, destroys superoxide anion radicals which are normally produced within the cells and which are toxic to biological systems. This Saccharomyces cerevisiae (strain ATCC 204508 / S288c) (Baker's yeast) protein is Superoxide dismutase [Mn], mitochondrial (SOD2).